Here is a 397-residue protein sequence, read N- to C-terminus: Staphyloferrin A transporter (397 aa).

12 consecutive transmembrane segments (helical) span residues 10–30 (FLLF…VLTT), 39–59 (IVNF…GAIA), 67–87 (LLRI…VLTY), 93–110 (PISV…LSAV), 137–157 (FIIN…LAVY), 162–182 (TFLA…PLHF), 213–233 (IFIT…LLPV), 245–265 (IFGI…LVLP), 271–292 (IGMV…LGVV), 296–313 (IVIM…SQWA), 333–353 (VLSI…LMSI), and 358–378 (FGIV…TMVF).

Belongs to the major facilitator superfamily.

It localises to the cell membrane. Involved in staphyloferrin A secretion. The sequence is that of Staphyloferrin A transporter from Staphylococcus aureus (strain NCTC 8325 / PS 47).